Reading from the N-terminus, the 1483-residue chain is Vacuolar protein sorting/targeting protein 10 (1483 aa).

A signal peptide spans 1-20 (MILRRLLLAGSLLLASLAAA). At 21-1356 (KKEGPKITAT…FEKKHPRLHG (1336 aa)) the chain is on the lumenal side. BNR repeat units follow at residues 58 to 67 (ISTDAGQSWS) and 103 to 113 (WVTEDAGKSWR). The N-linked (GlcNAc...) asparagine glycan is linked to N295. BNR repeat units follow at residues 375-385 (QISFDDGRTFH), 436-447 (YVSNDAGITWSK), 478-487 (YSIDHGKHWE), 718-728 (FITRDHGKTWK), and 817-826 (YSTDGGDEWH). N-linked (GlcNAc...) asparagine glycosylation occurs at N966. 2 BNR repeats span residues 1100–1110 (FITRDGGIEWH) and 1141–1151 (FYTLDEGKTWT). N1262 carries N-linked (GlcNAc...) asparagine glycosylation. A helical membrane pass occupies residues 1357-1377 (AGLFFAIVLPIAAAGVVGYYV). Over 1378-1405 (YTRWDGKFGRIRLGESGSSGDWLSRDSP) the chain is Cytoplasmic. Residues 1406 to 1426 (LIAIPIAIIAGTVAVLSALPL) traverse the membrane as a helical segment. Residues 1427 to 1483 (LAASLWRSARGWTPIGRSSRPYSSRGAFAARRGDYVGVVEDEDELLGAEDFEEDEEV) are Lumenal-facing.

Belongs to the VPS10-related sortilin family.

The protein resides in the golgi apparatus. It localises to the trans-Golgi network membrane. The protein localises to the prevacuolar compartment membrane. In terms of biological role, functions as a sorting receptor in the Golgi compartment required for the intracellular sorting and delivery of soluble vacuolar proteins, like carboxypeptidase Y (CPY) and proteinase A. Executes multiple rounds of sorting by cycling between the late Golgi and a prevacuolar endosome-like compartment. The protein is Vacuolar protein sorting/targeting protein 10 (VPS10) of Uncinocarpus reesii (strain UAMH 1704).